Consider the following 448-residue polypeptide: MNGSNLEHRIPALPHLGFGDVLLSHSLASTHYTVLAFLLAVCIPSAPRKSILRYGLLLLQITCALQAFVAPPPPTSDSAVLYTSGVLMANLLARYFDRLYTTVPEESFHRITSTKPESREDATKLPITQRLPWALELFSVTRGIGWNWRVSGIPKSTAPKSRSRFVTAQLLTIIAMYAGLYLVEVTCQGLLASYSSPGTTNANAVQTLAGNLVMYALIVLGLALVVYSHFALFVLPLSILCVGLQVGPVAWRDMSAWPPDYGSLWEAYSLRRFWGITWHQQLRRHTGAPAAYLFSFLPDAVRTSKRRSARLTRRYMLMLITFVISGLIHTSGSYHVSRGLGLPLSYGGEVKYFISQAISIMIEDFGCWLLRIDDRSAGEASTVRRWVGYIVTAGWYFWSRVHWSVMPVALASGIQDERGPLFIALEHTRRSAAAVPGNFAAKAWKITP.

N2 carries N-linked (GlcNAc...) asparagine glycosylation. A run of 8 helical transmembrane segments spans residues 21–41 (VLLS…LLAV), 54–74 (YGLL…PPPP), 79–96 (AVLY…ARYF), 165–185 (FVTA…LVEV), 217–237 (LIVL…VLPL), 316–336 (MLML…SYHV), 350–370 (VKYF…CWLL), and 390–410 (IVTA…PVAL).

It belongs to the wax synthase family.

The protein resides in the membrane. The protein operates within secondary metabolite biosynthesis; terpenoid biosynthesis. Functionally, O-Mevalon transferase yanI; part of the gene cluster that mediates the biosynthesis of yanuthone D, a fungal isoprenoid epoxycyclohexenone that acts as an antibiotic against fungi and bacteria. The first step of the pathway is the synthesis of 6-methylsalicylic acid (6-MSA) by the polyketide synthase yanA. 6-MSA is then converted to m-cresol by the decarboxylase yanB. The cytochrome P450 monooxygenase yanC then catalyzes the oxidation of m-cresol to toluquinol. Epoxidation of toluquinol is then performed by the short chain dehydrogenase yanD, with the help of yanE, and a further prenylation by yanG leads to 7-deacetoxyyanuthone A. The next step is the hydroxylation of C-22 of 7-deacetoxyyanuthone A by the cytochrome P450 monooxygenase yanH to yield 22-deacetylyanuthone A. O-Mevalon transferase yanI then attaches mevalon to the hydroxyl group of 22-deacetylyanuthone A to produce yanuthone E. Finally, the FAD-dependent monooxygenase yanF oxidizes the hydroxyl group at C15 of yanuthone E to form yanuthone D. Furthermore, several branching points in the pathway lead to the production of yanuthones F and G from 7-deacetoxyyanuthone A; yanuthones H and I from 22-deacetylyanuthone A; and yanuthone J from yanuthone E. The protein is O-Mevalon transferase yanI of Aspergillus niger (strain ATCC 1015 / CBS 113.46 / FGSC A1144 / LSHB Ac4 / NCTC 3858a / NRRL 328 / USDA 3528.7).